Here is a 311-residue protein sequence, read N- to C-terminus: Dehydrogenase/reductase SDR family member 7C (311 aa).

The signal sequence occupies residues 1-18; sequence MGIMAVLMLPLLLLGVSG. Positions 47, 49, 191, 195, and 226 each coordinate NAD(+). Y191 serves as the catalytic Proton acceptor.

Belongs to the short-chain dehydrogenases/reductases (SDR) family. In terms of tissue distribution, expressed in skeletal muscle, cardiac muscle and skin.

The protein resides in the sarcoplasmic reticulum membrane. It catalyses the reaction all-trans-retinol + NAD(+) = all-trans-retinal + NADH + H(+). NADH-dependent oxidoreductase which catalyzes the oxidation of all-trans-retinol to all-trans-retinal. Plays a role in the regulation of cardiac and skeletal muscle metabolic functions. Maintains Ca(2+) intracellular homeostasis by repressing Ca(2+) release from the sarcoplasmic reticulum (SR) in myotubes, possibly through local alternations in NAD/NADH or retinol/retinal. Also plays a role in Ca(2+) homeostasis by controlling Ca(2+) overload in the cytosol and the SR in myotubes. Involved in glucose uptake into skeletal muscles and muscle performance by activating PI3K and mTORC2-mediated AKT1 phosphorylation signaling pathways, possibly through the action of its downstream catalytic product all-trans-retinoic acid. This Rattus norvegicus (Rat) protein is Dehydrogenase/reductase SDR family member 7C.